The chain runs to 618 residues: Dihydroxy-acid dehydratase (618 aa).

Mg(2+) is bound at residue D81. C122 contacts [2Fe-2S] cluster. Mg(2+) is bound by residues D123 and K124. K124 is modified (N6-carboxylysine). C195 is a binding site for [2Fe-2S] cluster. A Mg(2+)-binding site is contributed by E492. Catalysis depends on S518, which acts as the Proton acceptor.

The protein belongs to the IlvD/Edd family. In terms of assembly, homodimer. [2Fe-2S] cluster serves as cofactor. Requires Mg(2+) as cofactor.

The enzyme catalyses (2R)-2,3-dihydroxy-3-methylbutanoate = 3-methyl-2-oxobutanoate + H2O. The catalysed reaction is (2R,3R)-2,3-dihydroxy-3-methylpentanoate = (S)-3-methyl-2-oxopentanoate + H2O. Its pathway is amino-acid biosynthesis; L-isoleucine biosynthesis; L-isoleucine from 2-oxobutanoate: step 3/4. It functions in the pathway amino-acid biosynthesis; L-valine biosynthesis; L-valine from pyruvate: step 3/4. Functionally, functions in the biosynthesis of branched-chain amino acids. Catalyzes the dehydration of (2R,3R)-2,3-dihydroxy-3-methylpentanoate (2,3-dihydroxy-3-methylvalerate) into 2-oxo-3-methylpentanoate (2-oxo-3-methylvalerate) and of (2R)-2,3-dihydroxy-3-methylbutanoate (2,3-dihydroxyisovalerate) into 2-oxo-3-methylbutanoate (2-oxoisovalerate), the penultimate precursor to L-isoleucine and L-valine, respectively. The sequence is that of Dihydroxy-acid dehydratase from Zymomonas mobilis subsp. mobilis (strain ATCC 31821 / ZM4 / CP4).